The primary structure comprises 444 residues: Phosphoribosylamine--glycine ligase (444 aa).

In terms of domain architecture, ATP-grasp spans 109 to 324 (RNLFKKYEID…FLDVCFAIAE (216 aa)). 140-202 (MTSLGKDVVV…EEKLVGVEFT (63 aa)) is a binding site for ATP. 3 residues coordinate Mg(2+): Gln282, Glu294, and Asn296. Residues Gln282, Glu294, and Asn296 each coordinate Mn(2+).

The protein belongs to the GARS family. It depends on Mg(2+) as a cofactor. The cofactor is Mn(2+).

It carries out the reaction 5-phospho-beta-D-ribosylamine + glycine + ATP = N(1)-(5-phospho-beta-D-ribosyl)glycinamide + ADP + phosphate + H(+). Its pathway is purine metabolism; IMP biosynthesis via de novo pathway; N(1)-(5-phospho-D-ribosyl)glycinamide from 5-phospho-alpha-D-ribose 1-diphosphate: step 2/2. The polypeptide is Phosphoribosylamine--glycine ligase (Methanococcus maripaludis (strain C7 / ATCC BAA-1331)).